We begin with the raw amino-acid sequence, 406 residues long: uncharacterized protein (406 aa).

Transmembrane regions (helical) follow at residues Leu7–Phe27, Tyr31–Val51, Leu65–Ile85, Ile92–Leu112, and Ile191–Phe211. Residues Thr259 to Asn331 are disordered. The segment covering Val262–Lys291 has biased composition (polar residues). Over residues Ser292 to Arg303 the composition is skewed to basic residues. Positions Asn306–Ser318 are enriched in low complexity. A compositionally biased stretch (polar residues) spans Pro319 to Asp330.

It is found in the membrane. This is an uncharacterized protein from Acanthamoeba polyphaga (Amoeba).